Consider the following 790-residue polypeptide: Sorting nexin mvp1 (790 aa).

2 stretches are compositionally biased toward polar residues: residues 1–10 (MSLFGSSPPN) and 20–40 (KTAN…TRSG). 3 disordered regions span residues 1–62 (MSLF…RKQR), 215–342 (PNLS…SIHN), and 373–406 (AITG…HVRS). A compositionally biased stretch (pro residues) spans 225-240 (PQRPVTPPKAPTPSPP). The span at 241 to 252 (KQQQQQQHQPPT) shows a compositional bias: low complexity. Positions 269–283 (DLHKGHNHGPLEHST) are enriched in basic and acidic residues. Polar residues predominate over residues 297 to 319 (NDLNGNDAVSYSTSPEVTTTSSA). 2 stretches are compositionally biased toward low complexity: residues 324–339 (TTST…GPSS) and 386–400 (QSVS…PNRS). The PX domain maps to 411–525 (EENILVTLMP…IMFLTVPTEL (115 aa)). Residues Arg-447, Ser-449, Lys-473, and Arg-492 each coordinate a 1,2-diacyl-sn-glycero-3-phospho-(1D-myo-inositol-3-phosphate).

The protein belongs to the sorting nexin family.

Its subcellular location is the cytoplasm. The protein localises to the membrane. Required for vacuolar protein sorting. The chain is Sorting nexin mvp1 (vsp-1) from Neurospora crassa (strain ATCC 24698 / 74-OR23-1A / CBS 708.71 / DSM 1257 / FGSC 987).